We begin with the raw amino-acid sequence, 150 residues long: 3-dehydroquinate dehydratase (150 aa).

Catalysis depends on Tyr26, which acts as the Proton acceptor. Substrate contacts are provided by Asn75, His81, and Asp88. The active-site Proton donor is His101. Substrate-binding positions include 102 to 103 and Arg112; that span reads LS.

The protein belongs to the type-II 3-dehydroquinase family. As to quaternary structure, homododecamer.

The enzyme catalyses 3-dehydroquinate = 3-dehydroshikimate + H2O. It functions in the pathway metabolic intermediate biosynthesis; chorismate biosynthesis; chorismate from D-erythrose 4-phosphate and phosphoenolpyruvate: step 3/7. Catalyzes a trans-dehydration via an enolate intermediate. In Shewanella loihica (strain ATCC BAA-1088 / PV-4), this protein is 3-dehydroquinate dehydratase.